We begin with the raw amino-acid sequence, 122 residues long: Large ribosomal subunit protein eL31 (122 aa).

It belongs to the eukaryotic ribosomal protein eL31 family.

The protein is Large ribosomal subunit protein eL31 of Caenorhabditis elegans.